A 111-amino-acid chain; its full sequence is UPF0339 protein ACIAD0721 (111 aa).

Repeat copies occupy residues 10–58 and 61–109. Positions 89–111 are disordered; it reads SRDKGIESVKNNGTTATVKDLTG.

It belongs to the UPF0339 family. Duplicated subfamily.

This is UPF0339 protein ACIAD0721 from Acinetobacter baylyi (strain ATCC 33305 / BD413 / ADP1).